The following is a 256-amino-acid chain: Short chain dehydrogenase adrF (256 aa).

6 residues coordinate NADP(+): Ile-11, Asp-57, Arg-119, Tyr-151, Lys-155, and Val-184. Residue Tyr-151 is the Proton acceptor of the active site. Catalysis depends on Lys-155, which acts as the Lowers pKa of active site Tyr.

This sequence belongs to the short-chain dehydrogenases/reductases (SDR) family.

It functions in the pathway secondary metabolite biosynthesis; terpenoid biosynthesis. Functionally, short chain dehydrogenase; part of the gene cluster that mediates the biosynthesis of andrastins, meroterpenoid compounds that exhibit inhibitory activity against ras farnesyltransferase, suggesting that they could be promising leads for antitumor agents. The first step of the pathway is the synthesis of 3,5-dimethylorsellinic acid (DMOA) by the polyketide synthase adrD via condensation of one acetyl-CoA starter unit with 3 malonyl-CoA units and 2 methylations. DMAO is then converted to farnesyl-DMAO by the prenyltransferase adrG. The methyltransferase adrK catalyzes the methylation of the carboxyl group of farnesyl-DMAO to farnesyl-DMAO methyl ester which is further converted to epoxyfarnesyl-DMAO methyl ester by the FAD-dependent monooxygenase adrH. The terpene cyclase adrI then catalyzes the carbon skeletal rearrangement to generate the andrastin E, the first compound in the pathway having the andrastin scaffold, with the tetracyclic ring system. The post-cyclization tailoring enzymes adrF, adrE, adrJ, and adrA, are involved in the conversion of andrastin E into andrastin A. The short chain dehydrogenase adrF is responsible for the oxidation of the C-3 a hydroxyl group of andrastin E to yield the corresponding ketone, andrastin D. The ketoreductase adrE stereoselectively reduces the carbonyl moiety to reverse the stereochemistry of the C-3 position to yield andrastin F. The acetyltransferase adrJ is the acetyltransferase that attaches the acetyl group to the C-3 hydroxyl group of andrastin F to yield andrastin C. Finally, the cytochrome P450 monooxygenase adrA catalyzes two sequential oxidation reactions of the C-23 methyl group, to generate the corresponding alcohol andrastin B, and aldehyde andrastin A. The chain is Short chain dehydrogenase adrF from Penicillium roqueforti.